A 307-amino-acid polypeptide reads, in one-letter code: Oxygen-dependent coproporphyrinogen-III oxidase (307 aa).

Residue Ser94 participates in substrate binding. 2 residues coordinate a divalent metal cation: His98 and His108. His108 functions as the Proton donor in the catalytic mechanism. 110–112 (NVR) is a binding site for substrate. Positions 147 and 177 each coordinate a divalent metal cation. The segment at 242–277 (YVEFNLVWDRGTLFGLQSGGRTESILMSMPPLAQWQ) is important for dimerization. 260 to 262 (GGR) provides a ligand contact to substrate.

This sequence belongs to the aerobic coproporphyrinogen-III oxidase family. As to quaternary structure, homodimer. It depends on a divalent metal cation as a cofactor.

Its subcellular location is the cytoplasm. The catalysed reaction is coproporphyrinogen III + O2 + 2 H(+) = protoporphyrinogen IX + 2 CO2 + 2 H2O. The protein operates within porphyrin-containing compound metabolism; protoporphyrin-IX biosynthesis; protoporphyrinogen-IX from coproporphyrinogen-III (O2 route): step 1/1. Involved in the heme biosynthesis. Catalyzes the aerobic oxidative decarboxylation of propionate groups of rings A and B of coproporphyrinogen-III to yield the vinyl groups in protoporphyrinogen-IX. The polypeptide is Oxygen-dependent coproporphyrinogen-III oxidase (Chromohalobacter salexigens (strain ATCC BAA-138 / DSM 3043 / CIP 106854 / NCIMB 13768 / 1H11)).